The chain runs to 122 residues: Large ribosomal subunit protein uL14 (122 aa).

Belongs to the universal ribosomal protein uL14 family. Part of the 50S ribosomal subunit. Forms a cluster with proteins L3 and L19. In the 70S ribosome, L14 and L19 interact and together make contacts with the 16S rRNA in bridges B5 and B8.

Binds to 23S rRNA. Forms part of two intersubunit bridges in the 70S ribosome. This chain is Large ribosomal subunit protein uL14, found in Mycoplasma genitalium (strain ATCC 33530 / DSM 19775 / NCTC 10195 / G37) (Mycoplasmoides genitalium).